The sequence spans 527 residues: Phosphoenolpyruvate carboxykinase (ATP) (527 aa).

Residues arginine 54, tyrosine 190, and lysine 196 each contribute to the substrate site. ATP contacts are provided by residues lysine 196, histidine 215, and 231–239; that span reads GLSGTGKTT. The Mn(2+) site is built by lysine 196 and histidine 215. Residue aspartate 252 coordinates Mn(2+). Residues glutamate 280, arginine 317, 436–437, and threonine 442 contribute to the ATP site; that span reads RI. Arginine 317 lines the substrate pocket.

This sequence belongs to the phosphoenolpyruvate carboxykinase (ATP) family. Mn(2+) is required as a cofactor.

The protein localises to the cytoplasm. The enzyme catalyses oxaloacetate + ATP = phosphoenolpyruvate + ADP + CO2. Its pathway is carbohydrate biosynthesis; gluconeogenesis. Functionally, involved in the gluconeogenesis. Catalyzes the conversion of oxaloacetate (OAA) to phosphoenolpyruvate (PEP) through direct phosphoryl transfer between the nucleoside triphosphate and OAA. This Oceanobacillus iheyensis (strain DSM 14371 / CIP 107618 / JCM 11309 / KCTC 3954 / HTE831) protein is Phosphoenolpyruvate carboxykinase (ATP).